The following is a 104-amino-acid chain: uncharacterized protein (104 aa).

Disordered stretches follow at residues 1–20 (MTETSTAKVATTKKSTTTRK) and 83–104 (TASASSSGKKVVASKKKVVAKK). Over residues 83–93 (TASASSSGKKV) the composition is skewed to low complexity. Residues 94–104 (VASKKKVVAKK) show a composition bias toward basic residues.

This is an uncharacterized protein from Dictyostelium discoideum (Social amoeba).